A 485-amino-acid polypeptide reads, in one-letter code: Arginine/agmatine antiporter (485 aa).

The next 12 helical transmembrane spans lie at 12-34, 38-60, 89-111, 126-148, 155-177, 211-230, 243-265, 291-313, 363-385, 400-422, 427-446, and 461-483; these read GTIA…SLPQ, ATAG…FFIA, IGFT…YAVI, GGNT…FIVL, SIIN…ILTA, TMLV…VMSG, VLGF…GSLF, VLMN…IIVA, WNTM…AAFL, IKAP…LIYA, YLFM…IDAG, and IVGM…TGRI.

The protein belongs to the amino acid-polyamine-organocation (APC) superfamily. Basic amino acid/polyamine antiporter (APA) (TC 2.A.3.2) family.

The protein localises to the cell inner membrane. In terms of biological role, catalyzes the exchange of L-arginine for agmatine. The arginine uptake by the bacterium in the macrophage may be a virulence factor against the host innate immune response. This chain is Arginine/agmatine antiporter (aaxC), found in Chlamydia pneumoniae (Chlamydophila pneumoniae).